A 1772-amino-acid chain; its full sequence is Putative stereocilin-like protein (1772 aa).

The signal sequence occupies residues 1-25 (MALSLWPLLLLLLLLLLLSFAVTLA). Residues N65, N427, N476, and N565 are each glycosylated (N-linked (GlcNAc...) asparagine).

Belongs to the stereocilin family.

The protein localises to the secreted. In Homo sapiens (Human), this protein is Putative stereocilin-like protein (STRCP1).